The following is a 380-amino-acid chain: 1-deoxy-D-xylulose 5-phosphate reductoisomerase (380 aa).

Positions 10, 11, 12, 13, 36, 37, 38, and 120 each coordinate NADPH. Lysine 121 contributes to the 1-deoxy-D-xylulose 5-phosphate binding site. An NADPH-binding site is contributed by glutamate 122. Aspartate 146 contributes to the Mn(2+) binding site. 1-deoxy-D-xylulose 5-phosphate is bound by residues serine 147, glutamate 148, serine 172, and histidine 195. Residue glutamate 148 coordinates Mn(2+). Residue glycine 201 participates in NADPH binding. 1-deoxy-D-xylulose 5-phosphate-binding residues include serine 208, asparagine 213, lysine 214, and glutamate 217. Mn(2+) is bound at residue glutamate 217.

Belongs to the DXR family. The cofactor is Mg(2+). Mn(2+) serves as cofactor.

It catalyses the reaction 2-C-methyl-D-erythritol 4-phosphate + NADP(+) = 1-deoxy-D-xylulose 5-phosphate + NADPH + H(+). It participates in isoprenoid biosynthesis; isopentenyl diphosphate biosynthesis via DXP pathway; isopentenyl diphosphate from 1-deoxy-D-xylulose 5-phosphate: step 1/6. Catalyzes the NADPH-dependent rearrangement and reduction of 1-deoxy-D-xylulose-5-phosphate (DXP) to 2-C-methyl-D-erythritol 4-phosphate (MEP). The polypeptide is 1-deoxy-D-xylulose 5-phosphate reductoisomerase (Listeria welshimeri serovar 6b (strain ATCC 35897 / DSM 20650 / CCUG 15529 / CIP 8149 / NCTC 11857 / SLCC 5334 / V8)).